The primary structure comprises 265 residues: Tryptophan synthase alpha chain (265 aa).

Catalysis depends on proton acceptor residues E41 and D52.

This sequence belongs to the TrpA family. As to quaternary structure, tetramer of two alpha and two beta chains.

The catalysed reaction is (1S,2R)-1-C-(indol-3-yl)glycerol 3-phosphate + L-serine = D-glyceraldehyde 3-phosphate + L-tryptophan + H2O. The protein operates within amino-acid biosynthesis; L-tryptophan biosynthesis; L-tryptophan from chorismate: step 5/5. Functionally, the alpha subunit is responsible for the aldol cleavage of indoleglycerol phosphate to indole and glyceraldehyde 3-phosphate. The protein is Tryptophan synthase alpha chain of Bacillus velezensis (strain DSM 23117 / BGSC 10A6 / LMG 26770 / FZB42) (Bacillus amyloliquefaciens subsp. plantarum).